The sequence spans 101 residues: Large ribosomal subunit protein uL23 (101 aa).

The protein belongs to the universal ribosomal protein uL23 family. Part of the 50S ribosomal subunit. Contacts protein L29, and trigger factor when it is bound to the ribosome.

Its function is as follows. One of the early assembly proteins it binds 23S rRNA. One of the proteins that surrounds the polypeptide exit tunnel on the outside of the ribosome. Forms the main docking site for trigger factor binding to the ribosome. The chain is Large ribosomal subunit protein uL23 from Nocardia farcinica (strain IFM 10152).